The following is a 231-amino-acid chain: Small ribosomal subunit protein uS2 (231 aa).

The protein belongs to the universal ribosomal protein uS2 family.

The protein is Small ribosomal subunit protein uS2 of Blochmanniella floridana.